The chain runs to 333 residues: Holliday junction branch migration complex subunit RuvB (333 aa).

The segment at 1–182 (MEERLVSGDV…FGVISRLEYY (182 aa)) is large ATPase domain (RuvB-L). ATP contacts are provided by residues Leu-21, Arg-22, Gly-63, Lys-66, Thr-67, Thr-68, 129 to 131 (EDY), Arg-172, Tyr-182, and Arg-219. Residue Thr-67 coordinates Mg(2+). Positions 183–253 (TTEHLTQIVM…LAKEALELLQ (71 aa)) are small ATPAse domain (RuvB-S). Residues 256–333 (RLGLDHIDHK…EHFGMEVPKQ (78 aa)) are head domain (RuvB-H). Residues Arg-311 and Arg-316 each coordinate DNA.

This sequence belongs to the RuvB family. Homohexamer. Forms an RuvA(8)-RuvB(12)-Holliday junction (HJ) complex. HJ DNA is sandwiched between 2 RuvA tetramers; dsDNA enters through RuvA and exits via RuvB. An RuvB hexamer assembles on each DNA strand where it exits the tetramer. Each RuvB hexamer is contacted by two RuvA subunits (via domain III) on 2 adjacent RuvB subunits; this complex drives branch migration. In the full resolvosome a probable DNA-RuvA(4)-RuvB(12)-RuvC(2) complex forms which resolves the HJ.

Its subcellular location is the cytoplasm. The enzyme catalyses ATP + H2O = ADP + phosphate + H(+). Functionally, the RuvA-RuvB-RuvC complex processes Holliday junction (HJ) DNA during genetic recombination and DNA repair, while the RuvA-RuvB complex plays an important role in the rescue of blocked DNA replication forks via replication fork reversal (RFR). RuvA specifically binds to HJ cruciform DNA, conferring on it an open structure. The RuvB hexamer acts as an ATP-dependent pump, pulling dsDNA into and through the RuvAB complex. RuvB forms 2 homohexamers on either side of HJ DNA bound by 1 or 2 RuvA tetramers; 4 subunits per hexamer contact DNA at a time. Coordinated motions by a converter formed by DNA-disengaged RuvB subunits stimulates ATP hydrolysis and nucleotide exchange. Immobilization of the converter enables RuvB to convert the ATP-contained energy into a lever motion, pulling 2 nucleotides of DNA out of the RuvA tetramer per ATP hydrolyzed, thus driving DNA branch migration. The RuvB motors rotate together with the DNA substrate, which together with the progressing nucleotide cycle form the mechanistic basis for DNA recombination by continuous HJ branch migration. Branch migration allows RuvC to scan DNA until it finds its consensus sequence, where it cleaves and resolves cruciform DNA. This Geobacillus sp. (strain WCH70) protein is Holliday junction branch migration complex subunit RuvB.